Here is a 113-residue protein sequence, read N- to C-terminus: Large ribosomal subunit protein bL19 (113 aa).

This sequence belongs to the bacterial ribosomal protein bL19 family.

In terms of biological role, this protein is located at the 30S-50S ribosomal subunit interface and may play a role in the structure and function of the aminoacyl-tRNA binding site. The chain is Large ribosomal subunit protein bL19 from Natranaerobius thermophilus (strain ATCC BAA-1301 / DSM 18059 / JW/NM-WN-LF).